Reading from the N-terminus, the 73-residue chain is Tetrahydromethanopterin S-methyltransferase subunit F (73 aa).

The helical transmembrane segment at 52 to 72 (IGFAAGFLFSLLMVIVLPLLF) threads the bilayer.

Belongs to the MtrF family. In terms of assembly, the complex is composed of 8 subunits; MtrA, MtrB, MtrC, MtrD, MtrE, MtrF, MtrG and MtrH.

It localises to the cell membrane. The catalysed reaction is 5-methyl-5,6,7,8-tetrahydromethanopterin + coenzyme M + 2 Na(+)(in) = 5,6,7,8-tetrahydromethanopterin + methyl-coenzyme M + 2 Na(+)(out). The protein operates within one-carbon metabolism; methanogenesis from CO(2); methyl-coenzyme M from 5,10-methylene-5,6,7,8-tetrahydromethanopterin: step 2/2. Its function is as follows. Part of a complex that catalyzes the formation of methyl-coenzyme M and tetrahydromethanopterin from coenzyme M and methyl-tetrahydromethanopterin. This is an energy-conserving, sodium-ion translocating step. The chain is Tetrahydromethanopterin S-methyltransferase subunit F from Methanosarcina barkeri (strain Fusaro / DSM 804).